The primary structure comprises 398 residues: 1-deoxy-D-xylulose 5-phosphate reductoisomerase (398 aa).

Residues threonine 11, glycine 12, serine 13, isoleucine 14, arginine 38, asparagine 39, and asparagine 125 each coordinate NADPH. A 1-deoxy-D-xylulose 5-phosphate-binding site is contributed by lysine 126. Glutamate 127 is an NADPH binding site. Aspartate 151 is a binding site for Mn(2+). 1-deoxy-D-xylulose 5-phosphate contacts are provided by serine 152, glutamate 153, serine 179, and histidine 202. Glutamate 153 contributes to the Mn(2+) binding site. An NADPH-binding site is contributed by glycine 208. Positions 215, 220, 221, and 224 each coordinate 1-deoxy-D-xylulose 5-phosphate. Residue glutamate 224 participates in Mn(2+) binding.

It belongs to the DXR family. Requires Mg(2+) as cofactor. It depends on Mn(2+) as a cofactor.

It catalyses the reaction 2-C-methyl-D-erythritol 4-phosphate + NADP(+) = 1-deoxy-D-xylulose 5-phosphate + NADPH + H(+). Its pathway is isoprenoid biosynthesis; isopentenyl diphosphate biosynthesis via DXP pathway; isopentenyl diphosphate from 1-deoxy-D-xylulose 5-phosphate: step 1/6. Its function is as follows. Catalyzes the NADPH-dependent rearrangement and reduction of 1-deoxy-D-xylulose-5-phosphate (DXP) to 2-C-methyl-D-erythritol 4-phosphate (MEP). The protein is 1-deoxy-D-xylulose 5-phosphate reductoisomerase of Burkholderia mallei (strain NCTC 10247).